The primary structure comprises 106 residues: Small ribosomal subunit protein bS18 (106 aa).

A disordered region spans residues 1–32 (MRWMKIMSEDMKQEQSGEGRGGRGGPARPLAS). The span at 7–21 (MSEDMKQEQSGEGRG) shows a compositional bias: basic and acidic residues.

It belongs to the bacterial ribosomal protein bS18 family. Part of the 30S ribosomal subunit. Forms a tight heterodimer with protein bS6.

In terms of biological role, binds as a heterodimer with protein bS6 to the central domain of the 16S rRNA, where it helps stabilize the platform of the 30S subunit. The sequence is that of Small ribosomal subunit protein bS18 from Magnetococcus marinus (strain ATCC BAA-1437 / JCM 17883 / MC-1).